Reading from the N-terminus, the 154-residue chain is MGKISSLPTQLFKCCFCDFLKQVKMPITSSSHLFYLALCLLAFTSSATAGPETLCGAELVDALQFVCGDRGFYFNKPTGYGSSSRRAPQTGIVDECCFRSCDLRRLEMYCAPLKPAKSARSVRAQRHTDMPKAQKEVHLKNTSRGSAGNKNYRM.

The segment at 50-78 is b; the sequence is GPETLCGAELVDALQFVCGDRGFYFNKPT. 3 cysteine pairs are disulfide-bonded: Cys55/Cys97, Cys67/Cys110, and Cys96/Cys101. The tract at residues 79–90 is c; it reads GYGSSSRRAPQT. The segment at 91 to 111 is a; that stretch reads GIVDECCFRSCDLRRLEMYCA. Positions 112 to 119 are d; that stretch reads PLKPAKSA. Residues 120-154 constitute a propeptide, e peptide; sequence RSVRAQRHTDMPKAQKEVHLKNTSRGSAGNKNYRM. The tract at residues 121–154 is disordered; that stretch reads SVRAQRHTDMPKAQKEVHLKNTSRGSAGNKNYRM. Over residues 126–139 the composition is skewed to basic and acidic residues; the sequence is RHTDMPKAQKEVHL. Residues 140–154 are compositionally biased toward polar residues; sequence KNTSRGSAGNKNYRM.

This sequence belongs to the insulin family. As to quaternary structure, forms a ternary complex with IGFR1 and ITGAV:ITGB3. Forms a ternary complex with IGFR1 and ITGA6:ITGB4. Forms a ternary complex with IGFBP3 and ALS.

Its subcellular location is the secreted. Functionally, the insulin-like growth factors, isolated from plasma, are structurally and functionally related to insulin but have a much higher growth-promoting activity. May be a physiological regulator of [1-14C]-2-deoxy-D-glucose (2DG) transport and glycogen synthesis in osteoblasts. Stimulates glucose transport in bone-derived osteoblastic (PyMS) cells and is effective at much lower concentrations than insulin, not only regarding glycogen and DNA synthesis but also with regard to enhancing glucose uptake. May play a role in synapse maturation. Ca(2+)-dependent exocytosis of IGF1 is required for sensory perception of smell in the olfactory bulb. Acts as a ligand for IGF1R. Binds to the alpha subunit of IGF1R, leading to the activation of the intrinsic tyrosine kinase activity which autophosphorylates tyrosine residues in the beta subunit thus initiating a cascade of down-stream signaling events leading to activation of the PI3K-AKT/PKB and the Ras-MAPK pathways. Binds to integrins ITGAV:ITGB3 and ITGA6:ITGB4. Its binding to integrins and subsequent ternary complex formation with integrins and IGFR1 are essential for IGF1 signaling. Induces the phosphorylation and activation of IGFR1, MAPK3/ERK1, MAPK1/ERK2 and AKT1. As part of the MAPK/ERK signaling pathway, acts as a negative regulator of apoptosis in cardiomyocytes via promotion of STUB1/CHIP-mediated ubiquitination and degradation of ICER-type isoforms of CREM. The polypeptide is Insulin-like growth factor 1 (Bos taurus (Bovine)).